A 375-amino-acid chain; its full sequence is Alpha-2,8-sialyltransferase 8B (375 aa).

The Cytoplasmic segment spans residues 1–6 (MQLQFR). Residues 7–23 (SWMLAALTLLVVFLIFA) form a helical; Signal-anchor for type II membrane protein membrane-spanning segment. At 24-375 (DISEIEEEIG…LTVGQCDGAT (352 aa)) the chain is on the lumenal side. N-linked (GlcNAc...) asparagine glycans are attached at residues N60, N72, N89, and N134. Intrachain disulfides connect C157-C307 and C171-C371. The CMP-N-acetyl-beta-neuraminate site is built by N162 and N185. N219 and N234 each carry an N-linked (GlcNAc...) asparagine glycan. CMP-N-acetyl-beta-neuraminate is bound by residues T294, T295, G296, W316, Y329, and H330. The active-site Proton donor/acceptor is the H346.

Belongs to the glycosyltransferase 29 family. In terms of processing, autopolysialylated. Autopolysialylation is not a prerequisite for the polysialylation acitity, but enhances the polysialylation acitity.

It localises to the golgi apparatus membrane. The protein localises to the secreted. It is found in the cell membrane. The enzyme catalyses [N-acetyl-alpha-D-neuraminosyl-(2-&gt;8)](n) + CMP-N-acetyl-beta-neuraminate = [N-acetyl-alpha-D-neuraminosyl-(2-&gt;8)](n+1) + CMP + H(+). It functions in the pathway protein modification; protein glycosylation. Catalyzes the transfer of a sialic acid from a CMP-linked sialic acid donor onto a terminal alpha-2,3-, alpha-2,6-, or alpha-2,8-linked sialic acid of an N-linked glycan acceptor through alpha-2,8-linkages. Therefore, participates in polysialic acid synthesis on various sialylated N-acetyllactosaminyl oligosaccharides (alpha-2,3-, alpha-2,6-, or alpha-2,8-linked sialic acid), including NCAM1, NCAM1 N-glycans, FETUB N-glycans, and to a lesser extent sialylparagloboside (SPG) and AHSG, which does not require the initial addition of an alpha 2,8-sialic acid. However, does not exhibit sialic acid-polymerase activity. Catalyzes polysialic acid synthesis in the hippocampal on NCAM1 and supports neurite outgrowth. ST8SIA2-mediated polysialylation influences on oligodendrocyte differentiation and may promote the integrity of myelin and axons. In Mus musculus (Mouse), this protein is Alpha-2,8-sialyltransferase 8B.